A 163-amino-acid chain; its full sequence is Ribonuclease H (163 aa).

Positions 1-142 (MRKQVAIFTD…CDELARTAAC (142 aa)) constitute an RNase H type-1 domain. Mg(2+) contacts are provided by D10, E48, D70, and D134.

This sequence belongs to the RNase H family. In terms of assembly, monomer. Requires Mg(2+) as cofactor.

Its subcellular location is the cytoplasm. The enzyme catalyses Endonucleolytic cleavage to 5'-phosphomonoester.. Its function is as follows. Endonuclease that specifically degrades the RNA of RNA-DNA hybrids. The protein is Ribonuclease H of Sodalis glossinidius (strain morsitans).